A 158-amino-acid polypeptide reads, in one-letter code: Transcription elongation factor GreA (158 aa).

Belongs to the GreA/GreB family.

Functionally, necessary for efficient RNA polymerase transcription elongation past template-encoded arresting sites. The arresting sites in DNA have the property of trapping a certain fraction of elongating RNA polymerases that pass through, resulting in locked ternary complexes. Cleavage of the nascent transcript by cleavage factors such as GreA or GreB allows the resumption of elongation from the new 3'terminus. GreA releases sequences of 2 to 3 nucleotides. The sequence is that of Transcription elongation factor GreA from Ralstonia nicotianae (strain ATCC BAA-1114 / GMI1000) (Ralstonia solanacearum).